We begin with the raw amino-acid sequence, 546 residues long: Immunoglobulin-like domain-containing receptor 1 (546 aa).

Residues 1–23 form the signal peptide; it reads MAWPKLPAPWLLLCTWLPAGCLS. An Ig-like V-type domain is found at 24 to 162; that stretch reads LLVTVQHTER…TSGDPDKEVK (139 aa). The Extracellular portion of the chain corresponds to 24-167; sequence LLVTVQHTER…DKEVKLIVLH (144 aa). A disulfide bridge links Cys-45 with Cys-145. A helical membrane pass occupies residues 168–188; that stretch reads WLTVIFIILGALLLLLLIGVC. Over 189–546 the chain is Cytoplasmic; it reads WCQCCPQYCC…SSHSGRSVVI (358 aa). Residues 399–546 are disordered; sequence WSGRHRSSRL…SSHSGRSVVI (148 aa). The span at 442–457 shows a compositional bias: basic and acidic residues; that stretch reads RCQERPRRPSPRESTQ. Positions 458–467 are enriched in basic residues; that stretch reads RHGRRRRHRS. Residues Ser-499 and Ser-501 each carry the phosphoserine modification. Over residues 527 to 539 the composition is skewed to basic and acidic residues; sequence GSVERRSEKDSSH.

It belongs to the immunoglobulin superfamily. LISCH7 family. Homooligomer. Interacts with MARVELD2 and OCLN; the interaction is required to recruit MARVELD2 to tricellular contacts. Interacts (via C-terminus) with TRA2A, TRA2B and SRSF1. Interacts with PLSCR1.

It is found in the cell membrane. The protein resides in the cell junction. Its subcellular location is the tight junction. It localises to the nucleus. The protein localises to the cytoplasm. Functionally, maintains epithelial barrier function by recruiting MARVELD2/tricellulin to tricellular tight junctions (tTJs). Crucial for normal hearing by maintaining the structural and functional integrity of tTJs, which are critical for the survival of auditory neurosensory HCs. Mediates fatty acids and lipoproteins-stimulated CCK/cholecystokinin secretion in the small intestine. In the inner ear, may regulate alternative pre-mRNA splicing via binding to TRA2A, TRA2B and SRSF1. The chain is Immunoglobulin-like domain-containing receptor 1 (ILDR1) from Pongo abelii (Sumatran orangutan).